Consider the following 1374-residue polypeptide: DNA-directed RNA polymerase subunit beta (1374 aa).

The protein belongs to the RNA polymerase beta chain family. The RNAP catalytic core consists of 2 alpha, 1 beta, 1 beta' and 1 omega subunit. When a sigma factor is associated with the core the holoenzyme is formed, which can initiate transcription.

It carries out the reaction RNA(n) + a ribonucleoside 5'-triphosphate = RNA(n+1) + diphosphate. Its function is as follows. DNA-dependent RNA polymerase catalyzes the transcription of DNA into RNA using the four ribonucleoside triphosphates as substrates. This chain is DNA-directed RNA polymerase subunit beta, found in Acidovorax ebreus (strain TPSY) (Diaphorobacter sp. (strain TPSY)).